Consider the following 786-residue polypeptide: Keratin, type I cytoskeletal 9 (786 aa).

Residues Met-1–Gly-21 are disordered. Residues Met-1–Asp-136 form a head region. Position 52 is a phosphoserine (Ser-52). Positions Glu-137 to Trp-172 are coil 1A. One can recognise an IF rod domain in the interval Glu-137–Phe-449. The linker 1 stretch occupies residues Tyr-173–Thr-191. The tract at residues Ile-192 to Leu-283 is coil 1B. Residues Thr-284–Ile-306 form a linker 12 region. The interval Leu-307 to Gly-445 is coil 2. A tail region spans residues Gln-446–Ser-760. The tract at residues Glu-447–Tyr-786 is disordered. 2 stretches are compositionally biased toward gly residues: residues Gly-460–Gly-657 and Ser-664–Gly-761. Low complexity predominate over residues Arg-762–Ser-773.

It belongs to the intermediate filament family. In terms of assembly, heterotetramer of two type I and two type II keratins.

Its function is as follows. May serve an important special function either in the mature palmar and plantar skin tissue or in the morphogenetic program of the formation of these tissues. Plays a role in keratin filament assembly. The polypeptide is Keratin, type I cytoskeletal 9 (Canis lupus familiaris (Dog)).